The primary structure comprises 191 residues: Prostaglandin-H2 D-isomerase (191 aa).

The N-terminal stretch at 1-24 (MAALHTLWMGLVLLGVLGVLQTRA) is a signal peptide. A Pyrrolidone carboxylic acid modification is found at glutamine 25. N-linked (GlcNAc...) asparagine glycosylation occurs at asparagine 51. Cysteine 65 (nucleophile) is an active-site residue. N-linked (GlcNAc...) asparagine glycosylation occurs at asparagine 78. A disulfide bridge connects residues cysteine 89 and cysteine 186.

Belongs to the calycin superfamily. Lipocalin family. Monomer. In terms of processing, N- and O-glycosylated. Both N-glycosylation recognition sites are almost quantitatively occupied by N-glycans of the biantennary complex type, with a considerable proportion of structures bearing a bisecting GlcNAc. N-glycan at Asn-78: dHex1Hex5HexNAc4. Agalacto structure as well as sialylated and nonsialylated oligosaccharides bearing alpha2-3- and/or alpha2-6-linked NeuNAc are present.

The protein resides in the rough endoplasmic reticulum. It is found in the nucleus membrane. The protein localises to the golgi apparatus. Its subcellular location is the cytoplasm. It localises to the perinuclear region. The protein resides in the secreted. The catalysed reaction is prostaglandin H2 = prostaglandin D2. In terms of biological role, catalyzes the conversion of PGH2 to PGD2, a prostaglandin involved in smooth muscle contraction/relaxation and a potent inhibitor of platelet aggregation. Involved in a variety of CNS functions, such as sedation, NREM sleep and PGE2-induced allodynia, and may have an anti-apoptotic role in oligodendrocytes. Binds small non-substrate lipophilic molecules, including biliverdin, bilirubin, retinal, retinoic acid and thyroid hormone, and may act as a scavenger for harmful hydrophobic molecules and as a secretory retinoid and thyroid hormone transporter. Possibly involved in development and maintenance of the blood-brain, blood-retina, blood-aqueous humor and blood-testis barrier. It is likely to play important roles in both maturation and maintenance of the central nervous system and male reproductive system. Involved in PLA2G3-dependent maturation of mast cells. PLA2G3 is secreted by immature mast cells and acts on nearby fibroblasts upstream to PTDGS to synthesize PGD2, which in turn promotes mast cell maturation and degranulation via PTGDR. This is Prostaglandin-H2 D-isomerase (PTGDS) from Felis catus (Cat).